The sequence spans 605 residues: Elongation factor 4 (605 aa).

Residues 4–186 enclose the tr-type G domain; sequence SSVRNFCIIA…AIVNKVPAPK (183 aa). GTP contacts are provided by residues 16–21 and 133–136; these read DHGKST and NKID.

It belongs to the TRAFAC class translation factor GTPase superfamily. Classic translation factor GTPase family. LepA subfamily.

The protein resides in the cell membrane. It catalyses the reaction GTP + H2O = GDP + phosphate + H(+). Required for accurate and efficient protein synthesis under certain stress conditions. May act as a fidelity factor of the translation reaction, by catalyzing a one-codon backward translocation of tRNAs on improperly translocated ribosomes. Back-translocation proceeds from a post-translocation (POST) complex to a pre-translocation (PRE) complex, thus giving elongation factor G a second chance to translocate the tRNAs correctly. Binds to ribosomes in a GTP-dependent manner. This is Elongation factor 4 from Dehalococcoides mccartyi (strain ATCC BAA-2100 / JCM 16839 / KCTC 5957 / BAV1).